Here is a 414-residue protein sequence, read N- to C-terminus: V-set and immunoglobulin domain-containing protein 8 (414 aa).

The N-terminal stretch at 1–21 (MRVGGAFHLLLVCLSPALLSA) is a signal peptide. Ig-like V-type domains lie at 22-141 (VRIN…VIVT) and 146-257 (PAVP…VKVS). Topologically, residues 22-263 (VRINGDGQEV…VKVSDSRRIG (242 aa)) are extracellular. 2 cysteine pairs are disulfide-bonded: Cys44–Cys126 and Cys167–Cys239. The chain crosses the membrane as a helical span at residues 264–284 (VIIGIVLGSLLALGCLAVGIW). Over 285-414 (GLVCCCCGGS…PVQCKNGLLV (130 aa)) the chain is Cytoplasmic.

It is found in the membrane. This Homo sapiens (Human) protein is V-set and immunoglobulin domain-containing protein 8.